A 762-amino-acid chain; its full sequence is Primary amine oxidase, lung isozyme (762 aa).

The N-terminal stretch at 1-16 (MFIFIFLSLWTLLVMG) is a signal peptide. Positions 23 to 54 (GSEEGVGKQCHPSLPPRCPSRSPSDQPWTHPD) are disordered. A glycan (N-linked (GlcNAc...) asparagine) is linked at asparagine 136. Cysteine 197 and cysteine 198 are oxidised to a cystine. An O-linked (GalNAc...) threonine glycan is attached at threonine 211. N-linked (GlcNAc...) asparagine glycosylation is found at asparagine 231 and asparagine 293. Residue 383 to 393 (YMDACFGMGKF) participates in substrate binding. The active-site Proton acceptor is the aspartate 385. Cysteine 403 and cysteine 429 are disulfide-bonded. 467 to 472 (LLNYDY) contacts substrate. The active-site Schiff-base intermediate with substrate; via topaquinone is the tyrosine 470. Tyrosine 470 carries the 2',4',5'-topaquinone modification. Positions 519 and 521 each coordinate Cu cation. The Ca(2+) site is built by aspartate 528, leucine 529, aspartate 530, and glutamate 571. 577-584 (PLGGGSPR) serves as a coordination point for heparin. Residue asparagine 617 is glycosylated (N-linked (GlcNAc...) asparagine). 2 residues coordinate Ca(2+): phenylalanine 662 and asparagine 664. Asparagine 665 is a glycosylation site (N-linked (GlcNAc...) asparagine). Glutamate 666, aspartate 672, and leucine 673 together coordinate Ca(2+). Histidine 683 is a binding site for Cu cation. The cysteines at positions 733 and 740 are disulfide-linked.

It belongs to the copper/topaquinone oxidase family. In terms of assembly, homodimer; disulfide-linked. The cofactor is Cu cation. Requires Ca(2+) as cofactor. L-topaquinone is required as a cofactor. In terms of processing, topaquinone (TPQ) is generated by copper-dependent autoxidation of a specific tyrosyl residue. Expressed in lung, spleen, heart and kidney.

It localises to the secreted. It is found in the extracellular space. The enzyme catalyses a primary methyl amine + O2 + H2O = an aldehyde + H2O2 + NH4(+). This Bos taurus (Bovine) protein is Primary amine oxidase, lung isozyme.